A 160-amino-acid chain; its full sequence is Zinc finger A20 and AN1 domain-containing stress-associated protein 5 (160 aa).

The A20-type zinc finger occupies 20–54; it reads TTTTTLCTNNCGVTANPATNNMCQKCFNASLVSAA. The Zn(2+) site is built by cysteine 26, cysteine 30, cysteine 42, cysteine 45, cysteine 101, cysteine 104, cysteine 115, cysteine 117, cysteine 122, histidine 125, histidine 131, and cysteine 133. The segment at 95-141 adopts an AN1-type zinc-finger fold; that stretch reads QQIVNRCSGCRKKVGLTGFRCRCGELFCSEHRYSDRHDCSYDYKTAG.

Its function is as follows. May be involved in environmental stress response. In Arabidopsis thaliana (Mouse-ear cress), this protein is Zinc finger A20 and AN1 domain-containing stress-associated protein 5 (SAP5).